We begin with the raw amino-acid sequence, 117 residues long: Large ribosomal subunit protein bL20 (117 aa).

It belongs to the bacterial ribosomal protein bL20 family.

Its function is as follows. Binds directly to 23S ribosomal RNA and is necessary for the in vitro assembly process of the 50S ribosomal subunit. It is not involved in the protein synthesizing functions of that subunit. This is Large ribosomal subunit protein bL20 from Rickettsia felis (strain ATCC VR-1525 / URRWXCal2) (Rickettsia azadi).